The primary structure comprises 65 residues: Large ribosomal subunit protein bL35 (65 aa).

Basic residues predominate over residues 1–15 (MPKMKTKKSASKRFT). Disordered stretches follow at residues 1–26 (MPKM…KRGQ) and 38–65 (TKNK…MPYA). A compositionally biased stretch (basic and acidic residues) spans 45–54 (RGTEGVHETN).

It belongs to the bacterial ribosomal protein bL35 family.

The protein is Large ribosomal subunit protein bL35 of Ralstonia pickettii (strain 12J).